Reading from the N-terminus, the 599-residue chain is Elongation factor 4 (599 aa).

The 183-residue stretch at 2-184 (KNIRNFSIIA…RLVRDIPPPQ (183 aa)) folds into the tr-type G domain. Residues 14 to 19 (DHGKST) and 131 to 134 (NKID) contribute to the GTP site.

The protein belongs to the TRAFAC class translation factor GTPase superfamily. Classic translation factor GTPase family. LepA subfamily.

It is found in the cell inner membrane. The catalysed reaction is GTP + H2O = GDP + phosphate + H(+). Its function is as follows. Required for accurate and efficient protein synthesis under certain stress conditions. May act as a fidelity factor of the translation reaction, by catalyzing a one-codon backward translocation of tRNAs on improperly translocated ribosomes. Back-translocation proceeds from a post-translocation (POST) complex to a pre-translocation (PRE) complex, thus giving elongation factor G a second chance to translocate the tRNAs correctly. Binds to ribosomes in a GTP-dependent manner. The chain is Elongation factor 4 from Salmonella agona (strain SL483).